The primary structure comprises 274 residues: Thiamine kinase (274 aa).

Belongs to the thiamine kinase family.

It catalyses the reaction thiamine + ATP = thiamine phosphate + ADP + H(+). The protein operates within cofactor biosynthesis; thiamine diphosphate biosynthesis; thiamine phosphate from thiamine: step 1/1. Functionally, catalyzes the ATP-dependent phosphorylation of thiamine to thiamine phosphate. Is involved in thiamine salvage. The sequence is that of Thiamine kinase from Salmonella dublin (strain CT_02021853).